A 282-amino-acid chain; its full sequence is tRNA pseudouridine synthase B (282 aa).

Residue D39 is the Nucleophile of the active site.

Belongs to the pseudouridine synthase TruB family. Type 1 subfamily.

It catalyses the reaction uridine(55) in tRNA = pseudouridine(55) in tRNA. Responsible for synthesis of pseudouridine from uracil-55 in the psi GC loop of transfer RNAs. The polypeptide is tRNA pseudouridine synthase B (Borrelia garinii subsp. bavariensis (strain ATCC BAA-2496 / DSM 23469 / PBi) (Borreliella bavariensis)).